The chain runs to 255 residues: Triosephosphate isomerase (255 aa).

Asn9–Lys11 is a substrate binding site. His95 serves as the catalytic Electrophile. Residue Glu167 is the Proton acceptor of the active site. Residues Gly173, Ser212, and Gly233–Gly234 each bind substrate.

This sequence belongs to the triosephosphate isomerase family. In terms of assembly, homodimer.

Its subcellular location is the cytoplasm. It carries out the reaction D-glyceraldehyde 3-phosphate = dihydroxyacetone phosphate. It participates in carbohydrate biosynthesis; gluconeogenesis. The protein operates within carbohydrate degradation; glycolysis; D-glyceraldehyde 3-phosphate from glycerone phosphate: step 1/1. Functionally, involved in the gluconeogenesis. Catalyzes stereospecifically the conversion of dihydroxyacetone phosphate (DHAP) to D-glyceraldehyde-3-phosphate (G3P). The chain is Triosephosphate isomerase from Klebsiella pneumoniae.